The primary structure comprises 245 residues: MIIPALDLIEGQVVRLFQGDYGQVTEYKVDPAEQFNLYHQAGANWLHLVDLTGAKDTTARQLDLIARLLASTPANIQIGGGVRNEDDVQDLLNAGAQRVVVGSTAVKQPELVKGWMEKYGAEKIVLALDINIDENGTRNVAISGWQEDSGVTIEALLEDYLTVGLKHVLCTDISRDGTLQGSNVELYVDLCKQYPQVQFQSSGGIGSLDDIAALKGSGVAGVIVGRALLDGKFTAEEAFQCWQSE.

The active-site Proton acceptor is aspartate 7. Aspartate 129 acts as the Proton donor in catalysis.

The protein belongs to the HisA/HisF family.

Its subcellular location is the cytoplasm. The enzyme catalyses 1-(5-phospho-beta-D-ribosyl)-5-[(5-phospho-beta-D-ribosylamino)methylideneamino]imidazole-4-carboxamide = 5-[(5-phospho-1-deoxy-D-ribulos-1-ylimino)methylamino]-1-(5-phospho-beta-D-ribosyl)imidazole-4-carboxamide. It functions in the pathway amino-acid biosynthesis; L-histidine biosynthesis; L-histidine from 5-phospho-alpha-D-ribose 1-diphosphate: step 4/9. This is 1-(5-phosphoribosyl)-5-[(5-phosphoribosylamino)methylideneamino] imidazole-4-carboxamide isomerase from Aliivibrio fischeri (strain ATCC 700601 / ES114) (Vibrio fischeri).